The following is a 335-amino-acid chain: Dihydroorotate dehydrogenase (quinone) (335 aa).

FMN is bound by residues Ala-61–Lys-65 and Thr-85. Lys-65 is a binding site for substrate. Residue Asn-110–Phe-114 participates in substrate binding. 2 residues coordinate FMN: Asn-138 and Asn-171. Residue Asn-171 coordinates substrate. Catalysis depends on Ser-174, which acts as the Nucleophile. Asn-176 serves as a coordination point for substrate. Positions 216 and 244 each coordinate FMN. Substrate is bound at residue Asn-245–Thr-246. Residues Gly-267, Gly-296, and Tyr-317 to Ser-318 each bind FMN.

The protein belongs to the dihydroorotate dehydrogenase family. Type 2 subfamily. In terms of assembly, monomer. The cofactor is FMN.

The protein localises to the cell membrane. The enzyme catalyses (S)-dihydroorotate + a quinone = orotate + a quinol. Its pathway is pyrimidine metabolism; UMP biosynthesis via de novo pathway; orotate from (S)-dihydroorotate (quinone route): step 1/1. Functionally, catalyzes the conversion of dihydroorotate to orotate with quinone as electron acceptor. The polypeptide is Dihydroorotate dehydrogenase (quinone) (Pseudoalteromonas atlantica (strain T6c / ATCC BAA-1087)).